Reading from the N-terminus, the 376-residue chain is Alcohol dehydrogenase class-3 (376 aa).

The residue at position 1 (Ala-1) is an N-acetylalanine. Residues Cys-47, His-69, Cys-99, Cys-102, Cys-105, Cys-113, and Cys-176 each coordinate Zn(2+).

The protein belongs to the zinc-containing alcohol dehydrogenase family. Class-III subfamily. In terms of assembly, homodimer. Zn(2+) serves as cofactor.

The protein localises to the cytoplasm. It carries out the reaction a primary alcohol + NAD(+) = an aldehyde + NADH + H(+). The enzyme catalyses a secondary alcohol + NAD(+) = a ketone + NADH + H(+). It catalyses the reaction S-(hydroxymethyl)glutathione + NADP(+) = S-formylglutathione + NADPH + H(+). The catalysed reaction is S-(hydroxymethyl)glutathione + NAD(+) = S-formylglutathione + NADH + H(+). It carries out the reaction S-nitrosoglutathione + NADH + H(+) = S-(hydroxysulfenamide)glutathione + NAD(+). Its function is as follows. Class-III ADH is remarkably ineffective in oxidizing ethanol, but it readily catalyzes the oxidation of long-chain primary alcohols and the oxidation of S-(hydroxymethyl) glutathione. Also acts as a S-nitroso-glutathione reductase by catalyzing the NADH-dependent reduction of S-nitrosoglutathione, thereby regulating protein S-nitrosylation. This chain is Alcohol dehydrogenase class-3, found in Scyliorhinus canicula (Small-spotted catshark).